Consider the following 191-residue polypeptide: Pyridoxal 5'-phosphate synthase subunit PdxT (191 aa).

46-48 (GES) is a binding site for L-glutamine. The active-site Nucleophile is the Cys78. L-glutamine contacts are provided by residues Arg105 and 133-134 (IR). Catalysis depends on charge relay system residues His169 and Glu171.

This sequence belongs to the glutaminase PdxT/SNO family. As to quaternary structure, in the presence of PdxS, forms a dodecamer of heterodimers. Only shows activity in the heterodimer.

It catalyses the reaction aldehydo-D-ribose 5-phosphate + D-glyceraldehyde 3-phosphate + L-glutamine = pyridoxal 5'-phosphate + L-glutamate + phosphate + 3 H2O + H(+). The enzyme catalyses L-glutamine + H2O = L-glutamate + NH4(+). Its pathway is cofactor biosynthesis; pyridoxal 5'-phosphate biosynthesis. Catalyzes the hydrolysis of glutamine to glutamate and ammonia as part of the biosynthesis of pyridoxal 5'-phosphate. The resulting ammonia molecule is channeled to the active site of PdxS. In Brevibacillus brevis (strain 47 / JCM 6285 / NBRC 100599), this protein is Pyridoxal 5'-phosphate synthase subunit PdxT.